Here is a 559-residue protein sequence, read N- to C-terminus: WD repeat-containing protein JIP5 (559 aa).

WD repeat units lie at residues 26–67 (QYSD…NYLQ), 77–116 (ADGK…WKTK), 117–156 (RHKG…VVKK), 162–201 (DNGG…ETNR), 207–247 (NGDD…ESDF), 265–306 (DQED…LEDQ), 313–347 (AKEE…DIKK), 354–394 (RNHS…SEEE), and 428–470 (DSDG…SDDE). Disordered regions lie at residues 386–500 (SRNE…LIGL) and 515–559 (EESE…FEGL). Over residues 391–417 (SEEEDDEESESFSDSDSDSDSDSDSDS) the composition is skewed to acidic residues. Basic and acidic residues predominate over residues 418–428 (DSDRDRDRDSD). The segment covering 482-494 (DMDDIDEGSDSSE) has biased composition (acidic residues). Positions 520–534 (EGEKLQKKRKNEPSK) are enriched in basic and acidic residues. Basic residues predominate over residues 535 to 544 (KNTKNLKKVK).

The protein belongs to the WD repeat WDR55 family.

It localises to the nucleus. The protein localises to the nucleolus. The chain is WD repeat-containing protein JIP5 (JIP5) from Vanderwaltozyma polyspora (strain ATCC 22028 / DSM 70294 / BCRC 21397 / CBS 2163 / NBRC 10782 / NRRL Y-8283 / UCD 57-17) (Kluyveromyces polysporus).